Here is a 313-residue protein sequence, read N- to C-terminus: MKLLLSKPRGFCAGVERAIETVEKALLLWGSPIYVKHEIVHNRHVVQGLKTKGAIFIEDVEDVPVGARLIYSAHGVSPAVREQAKKRQLIEIDATCGLVTRVHSAVKRYALQGYQIILIGHHNHVEIIGTAGEAPDVTTIVESVEDVKNLNFSSQDKLFYITQTTLSLDDVKEITQALIVKYPHVETLPSSSICYATTNRQMALREITDLTDLVLVVGDPQSSNSNRLREAASTRGIESYLINDEKEIHPEWLLGKQVIGLTAGASTPEEIVQKCIQCLIELGVNEVEDIVYTHEDVVFQLPKPIVNARFSVD.

Position 12 (C12) interacts with [4Fe-4S] cluster. Positions 41 and 74 each coordinate (2E)-4-hydroxy-3-methylbut-2-enyl diphosphate. Residues H41 and H74 each contribute to the dimethylallyl diphosphate site. Isopentenyl diphosphate is bound by residues H41 and H74. C96 serves as a coordination point for [4Fe-4S] cluster. Residue H124 participates in (2E)-4-hydroxy-3-methylbut-2-enyl diphosphate binding. A dimethylallyl diphosphate-binding site is contributed by H124. H124 is an isopentenyl diphosphate binding site. E126 functions as the Proton donor in the catalytic mechanism. T164 is a binding site for (2E)-4-hydroxy-3-methylbut-2-enyl diphosphate. C194 contributes to the [4Fe-4S] cluster binding site. Positions 222, 223, 224, and 266 each coordinate (2E)-4-hydroxy-3-methylbut-2-enyl diphosphate. 4 residues coordinate dimethylallyl diphosphate: S222, S223, N224, and S266. 4 residues coordinate isopentenyl diphosphate: S222, S223, N224, and S266.

Belongs to the IspH family. Requires [4Fe-4S] cluster as cofactor.

The catalysed reaction is isopentenyl diphosphate + 2 oxidized [2Fe-2S]-[ferredoxin] + H2O = (2E)-4-hydroxy-3-methylbut-2-enyl diphosphate + 2 reduced [2Fe-2S]-[ferredoxin] + 2 H(+). It catalyses the reaction dimethylallyl diphosphate + 2 oxidized [2Fe-2S]-[ferredoxin] + H2O = (2E)-4-hydroxy-3-methylbut-2-enyl diphosphate + 2 reduced [2Fe-2S]-[ferredoxin] + 2 H(+). Its pathway is isoprenoid biosynthesis; dimethylallyl diphosphate biosynthesis; dimethylallyl diphosphate from (2E)-4-hydroxy-3-methylbutenyl diphosphate: step 1/1. The protein operates within isoprenoid biosynthesis; isopentenyl diphosphate biosynthesis via DXP pathway; isopentenyl diphosphate from 1-deoxy-D-xylulose 5-phosphate: step 6/6. Functionally, catalyzes the conversion of 1-hydroxy-2-methyl-2-(E)-butenyl 4-diphosphate (HMBPP) into a mixture of isopentenyl diphosphate (IPP) and dimethylallyl diphosphate (DMAPP). Acts in the terminal step of the DOXP/MEP pathway for isoprenoid precursor biosynthesis. This chain is 4-hydroxy-3-methylbut-2-enyl diphosphate reductase, found in Protochlamydia amoebophila (strain UWE25).